The sequence spans 252 residues: Triosephosphate isomerase (252 aa).

10–12 (NWK) is a substrate binding site. The Electrophile role is filled by His-96. Residue Glu-168 is the Proton acceptor of the active site. Residues Gly-174, Ser-214, and 235–236 (GG) each bind substrate.

This sequence belongs to the triosephosphate isomerase family. Homodimer.

The protein localises to the cytoplasm. The catalysed reaction is D-glyceraldehyde 3-phosphate = dihydroxyacetone phosphate. It functions in the pathway carbohydrate biosynthesis; gluconeogenesis. It participates in carbohydrate degradation; glycolysis; D-glyceraldehyde 3-phosphate from glycerone phosphate: step 1/1. Functionally, involved in the gluconeogenesis. Catalyzes stereospecifically the conversion of dihydroxyacetone phosphate (DHAP) to D-glyceraldehyde-3-phosphate (G3P). The polypeptide is Triosephosphate isomerase (Lactobacillus delbrueckii subsp. bulgaricus (strain ATCC 11842 / DSM 20081 / BCRC 10696 / JCM 1002 / NBRC 13953 / NCIMB 11778 / NCTC 12712 / WDCM 00102 / Lb 14)).